We begin with the raw amino-acid sequence, 131 residues long: MGGKSAVRHQLVLDCPREAASSAPALRPLGAAATSRAAPLAPLPAPSPRWGLGCGRVRYPGPHPRRAVEPAAGPLSAPIIAGGHPAEAAAGSAKQQPRHSREVPRPPVPQHPSGNSRSALQEAKTEQTKTP.

The span at 31-40 (AAATSRAAPL) shows a compositional bias: low complexity. Residues 31 to 131 (AAATSRAAPL…EAKTEQTKTP (101 aa)) form a disordered region.

This is an uncharacterized protein from Homo sapiens (Human).